The following is a 792-amino-acid chain: Endonuclease MutS2 (792 aa).

Residue 334-341 participates in ATP binding; it reads GPNTGGKT. In terms of domain architecture, Smr spans 717-792; it reads IDLRGMMLSE…ENGVTVVELK (76 aa).

It belongs to the DNA mismatch repair MutS family. MutS2 subfamily. In terms of assembly, homodimer. Binds to stalled ribosomes, contacting rRNA.

In terms of biological role, endonuclease that is involved in the suppression of homologous recombination and thus may have a key role in the control of bacterial genetic diversity. Acts as a ribosome collision sensor, splitting the ribosome into its 2 subunits. Detects stalled/collided 70S ribosomes which it binds and splits by an ATP-hydrolysis driven conformational change. Acts upstream of the ribosome quality control system (RQC), a ribosome-associated complex that mediates the extraction of incompletely synthesized nascent chains from stalled ribosomes and their subsequent degradation. Probably generates substrates for RQC. The sequence is that of Endonuclease MutS2 from Ruminiclostridium cellulolyticum (strain ATCC 35319 / DSM 5812 / JCM 6584 / H10) (Clostridium cellulolyticum).